A 37-amino-acid polypeptide reads, in one-letter code: Neuropeptide Y2-like conopeptide (37 aa).

A Tyrosine amide modification is found at Tyr37.

Belongs to the NPY family. In terms of tissue distribution, expressed by the venom duct.

The protein localises to the secreted. In terms of biological role, causes hyperactivity such as jumping, rapid circling and tail flicking, after intraventicular injection into mouse brain. This Conus betulinus (Beech cone) protein is Neuropeptide Y2-like conopeptide.